The chain runs to 254 residues: Ornithine decarboxylase antizyme (254 aa).

It belongs to the ODC antizyme family. Interacts with ODC1 and thereby sterically blocks ODC homodimerization.

Functionally, ornithine decarboxylase (ODC) antizyme protein that negatively regulates ODC activity and intracellular polyamine biosynthesis and uptake in response to increased intracellular polyamine levels. Binds to ODC monomers, inhibiting the assembly of the functional ODC homodimer, and targets the monomers for ubiquitin-independent proteolytic destruction by the 26S proteasome. Required for cellular differentiation in neuronal and myogenic lineages during embryonic development. The polypeptide is Ornithine decarboxylase antizyme (Oda) (Drosophila melanogaster (Fruit fly)).